Reading from the N-terminus, the 417-residue chain is Serine hydroxymethyltransferase (417 aa).

(6S)-5,6,7,8-tetrahydrofolate-binding positions include Leu121 and 125 to 127 (GHL). Lys229 is modified (N6-(pyridoxal phosphate)lysine). 355 to 357 (SPF) provides a ligand contact to (6S)-5,6,7,8-tetrahydrofolate.

Belongs to the SHMT family. Homodimer. The cofactor is pyridoxal 5'-phosphate.

Its subcellular location is the cytoplasm. The enzyme catalyses (6R)-5,10-methylene-5,6,7,8-tetrahydrofolate + glycine + H2O = (6S)-5,6,7,8-tetrahydrofolate + L-serine. It functions in the pathway one-carbon metabolism; tetrahydrofolate interconversion. The protein operates within amino-acid biosynthesis; glycine biosynthesis; glycine from L-serine: step 1/1. Catalyzes the reversible interconversion of serine and glycine with tetrahydrofolate (THF) serving as the one-carbon carrier. This reaction serves as the major source of one-carbon groups required for the biosynthesis of purines, thymidylate, methionine, and other important biomolecules. Also exhibits THF-independent aldolase activity toward beta-hydroxyamino acids, producing glycine and aldehydes, via a retro-aldol mechanism. The polypeptide is Serine hydroxymethyltransferase (Tolumonas auensis (strain DSM 9187 / NBRC 110442 / TA 4)).